Reading from the N-terminus, the 594-residue chain is P-granule-associated novel protein 1 (594 aa).

The first 18 residues, 1–18 (MRSLLSFVLLALARIAIS), serve as a signal peptide directing secretion. The Extracellular portion of the chain corresponds to 19–513 (EETKSCIDIE…PEEEEVYRSG (495 aa)). 15 LRR repeats span residues 78–101 (GTEL…LFEN), 103–124 (FAKQ…SFQS), 125–149 (LGGS…LFTG), 150–173 (LKSL…AFEE), 175–197 (KKVE…TFDG), 198–221 (MKNL…AFRG), 222–245 (LNSL…IFSA), 246–269 (LKNL…SFPK), 271–290 (EKLV…KLKD), 291–315 (LPSL…MFGL), 318–341 (SDRI…AFQH), 343–365 (PNLI…SPSQ), 374–397 (LKKL…ELPK), 399–419 (LSSL…ALEG), and 420–442 (MEIK…TFDS). A helical membrane pass occupies residues 514–534 (WITVAATILTIVTIVIMVIIA). The Cytoplasmic segment spans residues 535–594 (MLYFKDARYQFPLRGRRSDSDLHKLIENDPLNIASDSILVVPAMPKRNTGPKKTVRFQNF).

In terms of assembly, interacts with glh-1. Interacts (via LRR regions) with myrf-1 (via C-terminus); the interaction promotes the role of myrf-1 in the synaptic remodeling of DD GABAergic motor neurons at the cell membrane. As to expression, expressed in the germline and somatic cells. Expressed in the germline and somatic cells. Expressed at higher levels in germline cells relative to somatic cells. In terms of tissue distribution, expressed in germline cells. As to expression, highly expressed in the pharynx and at lower levels in the intestine, but not detected in other tissues. Other studies suggest a broader expression pattern in somatic tissues: from embryogenesis to adult stages, expressed strongly in body wall muscle, vulva, somatic gonad and pharynx, at lower levels in the nerve ring, hypodermis, and rectal epithelia, and very weakly in the intestine.

It localises to the cytoplasm. It is found in the apical cell membrane. Functionally, regulates diverse developmental processes including larval molting and gonad maturation. Promotes the localization of myrf-1 and myrf-2 to the cell membrane. In association with myrf-1, promotes the synaptic remodeling of DD GABAergic motor neurons whereby new synapses form in the dorsal processes of DD neurons. The sequence is that of P-granule-associated novel protein 1 from Caenorhabditis elegans.